A 196-amino-acid chain; its full sequence is MPIGVPKVPFRSPGEEDASWVDIYNRLYRERLLFLGQEVDSEISNQLIGLMIYLSIEDDTKDLYLFINSPGGWVIPGVALYDTMQFVQPDVHTICMGSAASMGSFILVGGEITKRLAFPHARVMIHQPAGSFSEVATGEFILEVGELLKLRETLTRVYVQRTGKPLWVVSEDMERDVFMSATEAQAYGIVDLVAVE.

Ser101 serves as the catalytic Nucleophile. Residue His126 is part of the active site.

The protein belongs to the peptidase S14 family. As to quaternary structure, component of the chloroplastic Clp protease core complex.

The protein resides in the plastid. It localises to the chloroplast stroma. It carries out the reaction Hydrolysis of proteins to small peptides in the presence of ATP and magnesium. alpha-casein is the usual test substrate. In the absence of ATP, only oligopeptides shorter than five residues are hydrolyzed (such as succinyl-Leu-Tyr-|-NHMec, and Leu-Tyr-Leu-|-Tyr-Trp, in which cleavage of the -Tyr-|-Leu- and -Tyr-|-Trp bonds also occurs).. Functionally, cleaves peptides in various proteins in a process that requires ATP hydrolysis. Has a chymotrypsin-like activity. Plays a major role in the degradation of misfolded proteins. The polypeptide is ATP-dependent Clp protease proteolytic subunit (Lactuca sativa (Garden lettuce)).